The primary structure comprises 150 residues: S-protein homolog 3 (150 aa).

Positions 1–23 (MKNILKTQVHVVVIYLLIKIAFS) are cleaved as a signal peptide. N-linked (GlcNAc...) asparagine glycosylation is found at Asn32 and Asn70.

Belongs to the plant self-incompatibility (S1) protein family.

It is found in the secreted. This is S-protein homolog 3 from Arabidopsis thaliana (Mouse-ear cress).